We begin with the raw amino-acid sequence, 299 residues long: tRNA pseudouridine synthase B (299 aa).

The active-site Nucleophile is Asp-47.

The protein belongs to the pseudouridine synthase TruB family. Type 1 subfamily.

It carries out the reaction uridine(55) in tRNA = pseudouridine(55) in tRNA. Its function is as follows. Responsible for synthesis of pseudouridine from uracil-55 in the psi GC loop of transfer RNAs. This chain is tRNA pseudouridine synthase B, found in Dechloromonas aromatica (strain RCB).